Reading from the N-terminus, the 35-residue chain is Tau/kappa-theraphotoxin-Pc1a (35 aa).

3 disulfide bridges follow: cysteine 3-cysteine 17, cysteine 10-cysteine 22, and cysteine 16-cysteine 29. At phenylalanine 35 the chain carries Phenylalanine amide.

This sequence belongs to the neurotoxin 10 (Hwtx-1) family. 62 (Vatx) subfamily. In terms of tissue distribution, expressed by the venom gland.

It is found in the secreted. In terms of biological role, selectively activates mammalian TRPV1, the capsaicin receptor, a non-selective cation channel expressed by sensory neurons of the pain pathway. Is less potent than VaTx2 and VaTx3. Interacts with distinct regions of the channel than capsaicin, since it only acts on the extracellular face of the channel, and capsaicin binds to the cytosolic side. Also activates avian TRPV1, which is insensitive to capsaicin. Significantly inhibits potassium channels Kv2.1/KCNB1. This Psalmopoeus cambridgei (Trinidad chevron tarantula) protein is Tau/kappa-theraphotoxin-Pc1a.